Here is a 538-residue protein sequence, read N- to C-terminus: MLSNNIIRQQLIHYGITDCCELIYNPSFEQLVREETNHNLTNLERGTITNSGAIAVNTGIFTGRSPLDKYIVCDNDTHHQLWWSDQDKTSNNQPISQITWQYLKKLVSKQLSYKRLFIIDVYCGAKKNSRLRVRFVTEVAWQAHFVKNMFIQPDAIDLISFEPEFIVLNGAKCTNPNWREQNMHSENFIALNLTEGMQLIAGTWYGGEMKKGLFTVMNYHLPLKGIASMHCSANVGINKDVALFFGLSGTGKTTLSHDTNRALIGDDEHGWDNDGIFNLEGGCYAKTINLKPELEPEIFQAIRCNALLENVMVRADGSVNYHDNSKTDNARVSYPLNHIKNRVQPVSCASHASTIIFLTADAFGVLPPVATLTNEQAQYYFLSGFSAKLSGTERGIISPVPTFSACFGAAFLALHPTVYAALLAKRMNIAGTNAYLVNTGWNGNGSRIALKDTKAIINAILNKQIQDTPTIKLPIFNLSIPQILIGVDSNILDPRTSYINSSEWQNKARSLAQLFIKNFNKFTLPLTCKKLHNAGPQL.

Substrate contacts are provided by Arg-64, Tyr-205, and Lys-211. ATP is bound by residues Lys-211, His-230, and 246 to 254 (GLSGTGKTT). Residues Lys-211 and His-230 each coordinate Mn(2+). Asp-267 is a Mn(2+) binding site. ATP-binding positions include Glu-295, Arg-331, 447 to 448 (RI), and Thr-453. Substrate is bound at residue Arg-331.

The protein belongs to the phosphoenolpyruvate carboxykinase (ATP) family. In terms of assembly, monomer. The cofactor is Mn(2+).

It localises to the cytoplasm. The catalysed reaction is oxaloacetate + ATP = phosphoenolpyruvate + ADP + CO2. Its pathway is carbohydrate biosynthesis; gluconeogenesis. Involved in the gluconeogenesis. Catalyzes the conversion of oxaloacetate (OAA) to phosphoenolpyruvate (PEP) through direct phosphoryl transfer between the nucleoside triphosphate and OAA. This Baumannia cicadellinicola subsp. Homalodisca coagulata protein is Phosphoenolpyruvate carboxykinase (ATP).